Reading from the N-terminus, the 610-residue chain is Tyrosine-protein kinase Drl (610 aa).

The first 20 residues, 1-20, serve as a signal peptide directing secretion; sequence MAPNLLTIGLLLTLIASGQA. The Extracellular segment spans residues 21–242; it reads HLNIFLNLHE…RENLVPPASG (222 aa). In terms of domain architecture, WIF spans 24–155; sequence IFLNLHEVLR…NLIFKRKKIC (132 aa). Asn-63, Asn-99, and Asn-143 each carry an N-linked (GlcNAc...) asparagine glycan. Residues 202–230 are disordered; the sequence is QAPEKQRPVVTESPVGRGNSGGSKRDFDP. A helical membrane pass occupies residues 243–263; the sequence is LVTLIVGGILALVLVSTLILI. Topologically, residues 264-610 are cytoplasmic; sequence AYCAKGPSKR…EFHTQITRYV (347 aa). The region spanning 343–606 is the Protein kinase domain; that stretch reads VRLSCLVQEG…ICLSEFHTQI (264 aa). ATP is bound by residues 349–357 and Lys-371; that span reads VQEGNFGRI. Residue Asp-468 is the Proton acceptor of the active site. Tyr-498 is modified (phosphotyrosine; by autocatalysis).

It belongs to the protein kinase superfamily. Tyr protein kinase family. In the embryonic abdominal hemisegment, expression is restricted to cell body, axon and growth cone of a cluster of 20 ventral nerve cord interneurons. During muscle growth and attachment events in the embryonic abdominal hemisegment, expression is in somatic muscle fibers 21-23 at 10-13 hours and 2 patches of approximately 15 neighboring epidermal cells (dorsal and ventral attachment sites) at 6-13 hours.

It is found in the cell membrane. It carries out the reaction L-tyrosyl-[protein] + ATP = O-phospho-L-tyrosyl-[protein] + ADP + H(+). Functionally, probable coreceptor of Wnt proteins. Involved in neuronal pathway recognition and ventral muscle attachment site selection. Non-vital for development. May be part of a signal transduction cascade involved in learning and possibly memory. The polypeptide is Tyrosine-protein kinase Drl (drl) (Drosophila melanogaster (Fruit fly)).